The sequence spans 501 residues: Lysine--tRNA ligase (501 aa).

Residues Glu-406 and Glu-413 each coordinate Mg(2+).

The protein belongs to the class-II aminoacyl-tRNA synthetase family. Homodimer. Mg(2+) serves as cofactor.

It is found in the cytoplasm. The catalysed reaction is tRNA(Lys) + L-lysine + ATP = L-lysyl-tRNA(Lys) + AMP + diphosphate. This chain is Lysine--tRNA ligase (lysS), found in Halalkalibacterium halodurans (strain ATCC BAA-125 / DSM 18197 / FERM 7344 / JCM 9153 / C-125) (Bacillus halodurans).